Consider the following 326-residue polypeptide: Protease inhibitor (326 aa).

An N-terminal signal peptide occupies residues 1–24 (MKTIRTGMMTLAALAVLGTNVVSA). A run of 2 repeats spans residues 177–208 (IILHVDKETKITTADGKELKPEDLQLGMEVEA) and 272–304 (VALIVGKDTKIVSAKDNKELAPEDLKAEMKVFA). Residues 177–304 (IILHVDKETK…DLKAEMKVFA (128 aa)) form a 2 X 32 AA approximate repeats region.

Post-translationally, proteolytically cleaved to yield at least three forms (BBRPI-A, -B, and -C).

It localises to the secreted. Its function is as follows. Shows inhibitory activity towards serine proteases, such as trypsin, chymotrypsin and subtilisin. May form a trypsin-inhibitor complex in a molar ratio of 1:1. The polypeptide is Protease inhibitor (Brevibacillus choshinensis).